Here is a 57-residue protein sequence, read N- to C-terminus: Large ribosomal subunit protein bL32c (57 aa).

Belongs to the bacterial ribosomal protein bL32 family.

Its subcellular location is the plastid. It is found in the chloroplast. The polypeptide is Large ribosomal subunit protein bL32c (Phalaenopsis aphrodite subsp. formosana (Moth orchid)).